A 48-amino-acid chain; its full sequence is Thiamine thiazole synthase, chloroplastic (48 aa).

2 residues coordinate substrate: Ala-18 and Val-40.

Belongs to the THI4 family. As to quaternary structure, homooctamer. Requires Fe cation as cofactor.

The protein resides in the plastid. It is found in the chloroplast. The catalysed reaction is [ADP-thiazole synthase]-L-cysteine + glycine + NAD(+) = [ADP-thiazole synthase]-dehydroalanine + ADP-5-ethyl-4-methylthiazole-2-carboxylate + nicotinamide + 3 H2O + 2 H(+). Its function is as follows. Involved in biosynthesis of the thiamine precursor thiazole. Catalyzes the conversion of NAD and glycine to adenosine diphosphate 5-(2-hydroxyethyl)-4-methylthiazole-2-carboxylic acid (ADT), an adenylated thiazole intermediate. The reaction includes an iron-dependent sulfide transfer from a conserved cysteine residue of the protein to a thiazole intermediate. The enzyme can only undergo a single turnover, which suggests it is a suicide enzyme. May have additional roles in adaptation to various stress conditions and in DNA damage tolerance. The chain is Thiamine thiazole synthase, chloroplastic (THI1) from Populus euphratica (Euphrates poplar).